A 78-amino-acid polypeptide reads, in one-letter code: Putative permease-like protein YdzE (78 aa).

Helical transmembrane passes span 2–22, 27–47, and 49–69; these read YLGI…LQLL, GGLF…ILLG, and QIGG…LLVI. An EamA domain is found at 2–70; sequence YLGIVSTACA…ILSGVLLVIK (69 aa).

The protein belongs to the EamA transporter family.

The protein resides in the cell membrane. The protein is Putative permease-like protein YdzE (ydzE) of Bacillus subtilis (strain 168).